We begin with the raw amino-acid sequence, 135 residues long: L-ectoine synthase (135 aa).

It belongs to the ectoine synthase family.

It catalyses the reaction (2S)-4-acetamido-2-aminobutanoate = L-ectoine + H2O. It participates in amine and polyamine biosynthesis; ectoine biosynthesis; L-ectoine from L-aspartate 4-semialdehyde: step 3/3. Catalyzes the circularization of gamma-N-acetyl-alpha,gamma-diaminobutyric acid (ADABA) to ectoine (1,4,5,6-tetrahydro-2-methyl-4-pyrimidine carboxylic acid), which is an excellent osmoprotectant. This Hyphomonas neptunium (strain ATCC 15444) protein is L-ectoine synthase.